The primary structure comprises 296 residues: Trimeric intracellular cation channel type A (296 aa).

Topologically, residues 1–19 (MELPGALQLGELAAAFASV) are lumenal. Residues 20 to 37 (PVFPLFDAAYFIVSVLYL) traverse the membrane as a helical segment. The Cytoplasmic portion of the chain corresponds to 38–51 (KYEPGAVEMSRKSP). A helical transmembrane segment spans residues 52-73 (FASWLCAMLHCFGSYILADLLL). Residue Gly-74 coordinates Ca(2+). Over 74–85 (GESPIHYFSNNS) the chain is Lumenal. The helical transmembrane segment at 86-103 (SVILATAVWYLIFFCPMN) threads the bilayer. Over 104-107 (LFYK) the chain is Cytoplasmic. The helical transmembrane segment at 108–126 (CVSFLPVKLIFVAMKEVVR) threads the bilayer. A 1,2-diacyl-sn-glycero-3-phospho-(1D-myo-inositol-4,5-bisphosphate)-binding residues include Lys-122 and Arg-126. Residues 127 to 144 (VRKIAAGVHHAHHQYHHG) lie on the Lumenal side of the membrane. A helical transmembrane segment spans residues 145 to 162 (WFIMMATGWVKGSGVALM). Residues 163-183 (SNFEQLLRGVWRPETNEILHM) lie on the Cytoplasmic side of the membrane. The chain crosses the membrane as a helical span at residues 184 to 201 (SFPTKASLYGTVLFTLQQ). Topologically, residues 202–209 (THWLPVSE) are lumenal. Residues 210–230 (ANLVFFFTMFMIVCKVFMTAT) form a helical membrane-spanning segment. The Cytoplasmic portion of the chain corresponds to 231–273 (HSHASPFAPVEGFICPVFFGSVSSGHTSHHNQHGHSHEASYQP). The disordered stretch occupies residues 256–296 (HTSHHNQHGHSHEASYQPPPPVKSKEELNEGTRKRKAKKAE). Positions 278–287 (KSKEELNEGT) are enriched in basic and acidic residues.

It belongs to the TMEM38 family. Homotrimer; conformation seems to be controled by binding to diacylglycerol (DAG).

The protein localises to the sarcoplasmic reticulum membrane. The protein resides in the nucleus membrane. The enzyme catalyses K(+)(in) = K(+)(out). Channel activity is activated by a change of voltage within the sarcoplasmic reticulum lumen and blocked by luminal high Ca(2+) levels. In terms of biological role, intracellular monovalent cation channel required for maintenance of rapid intracellular calcium release. Acts as a potassium counter-ion channel that functions in synchronization with calcium release from intracellular stores. Opened by a change of voltage within the sarcoplasmic reticulum lumen. The chain is Trimeric intracellular cation channel type A (TMEM38A) from Gallus gallus (Chicken).